A 476-amino-acid polypeptide reads, in one-letter code: Transmembrane transporter FPSE_08127 (476 aa).

Residues 72–92 traverse the membrane as a helical segment; the sequence is ILAIPAALGALGSIGGSLCII. Residue Asn111 is glycosylated (N-linked (GlcNAc...) asparagine). 9 consecutive transmembrane segments (helical) span residues 133–153, 164–184, 192–212, 231–251, 275–295, 317–337, 364–384, 387–407, and 431–451; these read LVGV…VVAI, GTCT…FSAI, WLTW…VVAV, WAPI…NIFI, ACLV…LVIY, VAYG…QHVA, LGIN…VPIL, LLGL…PALL, and LIMM…VVLI.

This sequence belongs to the amino acid/polyamine transporter 2 family.

It is found in the membrane. Transmembrane transporter; part of the Fusarium detoxification of benzoxazolinone cluster involved in the degradation of benzoxazolinones produced by the host plant. Maize, wheat, and rye produce the 2 benzoxazinone phytoanticipins 2,4-dihy-droxy-7-methoxy-1,4-benzoxazin-3-one (DIMBOA) and 2,4-dihydroxy-1,4-benzoxazin-3-one (DIBOA) that, due to their inherent instability once released, spontaneously degrade to the more stable corresponding benzoxazolinones, 6-methoxy-2-benzoxazolinone (MBOA) and 2-benzoxazolinone (BOA), respectively. FPSE_08127 is proposed to shuttle metabolites of benzoxazolinone degradation. The chain is Transmembrane transporter FPSE_08127 from Fusarium pseudograminearum (strain CS3096) (Wheat and barley crown-rot fungus).